The primary structure comprises 363 residues: Trans-2,3-enoyl-CoA reductase-like (363 aa).

A Phosphoserine modification is found at serine 37. A run of 4 helical transmembrane segments spans residues 143–163, 216–235, 250–270, and 311–331; these read WTTV…LFYL, NLLK…AYYI, VAIS…INVV, and ISFT…LMSI.

Belongs to the steroid 5-alpha reductase family.

It is found in the membrane. Its subcellular location is the endoplasmic reticulum. In Bos taurus (Bovine), this protein is Trans-2,3-enoyl-CoA reductase-like (TECRL).